A 406-amino-acid polypeptide reads, in one-letter code: Cysteine desulfurase (406 aa).

Position 226 is an N6-(pyridoxal phosphate)lysine (Lys-226). The active-site Cysteine persulfide intermediate is Cys-364.

Belongs to the class-V pyridoxal-phosphate-dependent aminotransferase family. Csd subfamily. Homodimer. Interacts with SufE and the SufBCD complex composed of SufB, SufC and SufD. The interaction with SufE is required to mediate the direct transfer of the sulfur atom from the S-sulfanylcysteine. The cofactor is pyridoxal 5'-phosphate.

The protein resides in the cytoplasm. The enzyme catalyses (sulfur carrier)-H + L-cysteine = (sulfur carrier)-SH + L-alanine. The catalysed reaction is L-selenocysteine + AH2 = hydrogenselenide + L-alanine + A + H(+). It functions in the pathway cofactor biosynthesis; iron-sulfur cluster biosynthesis. Functionally, cysteine desulfurases mobilize the sulfur from L-cysteine to yield L-alanine, an essential step in sulfur metabolism for biosynthesis of a variety of sulfur-containing biomolecules. Component of the suf operon, which is activated and required under specific conditions such as oxidative stress and iron limitation. Acts as a potent selenocysteine lyase in vitro, that mobilizes selenium from L-selenocysteine. Selenocysteine lyase activity is however unsure in vivo. The polypeptide is Cysteine desulfurase (Escherichia coli O9:H4 (strain HS)).